The sequence spans 287 residues: Succinate dehydrogenase [ubiquinone] iron-sulfur subunit, mitochondrial (287 aa).

Residues 1–23 constitute a mitochondrion transit peptide; that stretch reads MISNVLKRASVLARSNGIQSAFY. The 2Fe-2S ferredoxin-type domain occupies 51–140; the sequence is FQVYRYNEET…GDTVKVYPLP (90 aa). Residues cysteine 101, cysteine 106, cysteine 109, and cysteine 121 each coordinate [2Fe-2S] cluster. In terms of domain architecture, 4Fe-4S ferredoxin-type spans 186–216; it reads NRHKLDGLYECILCACCSTSCPSYWWSEGGD. The [4Fe-4S] cluster site is built by cysteine 196, cysteine 199, and cysteine 202. Residue cysteine 206 participates in [3Fe-4S] cluster binding. Tryptophan 211 is a binding site for a ubiquinone. The [3Fe-4S] cluster site is built by cysteine 257 and cysteine 263. A [4Fe-4S] cluster-binding site is contributed by cysteine 267.

It belongs to the succinate dehydrogenase/fumarate reductase iron-sulfur protein family. Component of complex II composed of four subunits: the flavoprotein (FP) SDHA, iron-sulfur protein (IP) SDHB, and a cytochrome b composed of a large and a small subunit. The cofactor is [2Fe-2S] cluster. [3Fe-4S] cluster is required as a cofactor. Requires [4Fe-4S] cluster as cofactor.

The protein resides in the mitochondrion inner membrane. It catalyses the reaction a quinone + succinate = fumarate + a quinol. The protein operates within carbohydrate metabolism; tricarboxylic acid cycle; fumarate from succinate (eukaryal route): step 1/1. Iron-sulfur protein (IP) subunit of succinate dehydrogenase (SDH) that is involved in complex II of the mitochondrial electron transport chain and is responsible for transferring electrons from succinate to ubiquinone (coenzyme Q). The protein is Succinate dehydrogenase [ubiquinone] iron-sulfur subunit, mitochondrial (sdhB) of Dictyostelium discoideum (Social amoeba).